The chain runs to 129 residues: Follitropin subunit beta (129 aa).

An N-terminal signal peptide occupies residues 1-18; sequence MKSVQFCFLFCCWRATCC. 6 cysteine pairs are disulfide-bonded: cysteine 21–cysteine 69, cysteine 35–cysteine 84, cysteine 38–cysteine 122, cysteine 46–cysteine 100, cysteine 50–cysteine 102, and cysteine 105–cysteine 112. Residues asparagine 25 and asparagine 42 are each glycosylated (N-linked (GlcNAc...) asparagine).

This sequence belongs to the glycoprotein hormones subunit beta family. In terms of assembly, heterodimer. The active follitropin is a heterodimer composed of an alpha chain/CGA shared with other hormones and a unique beta chain/FSHB shown here.

Its subcellular location is the secreted. Together with the alpha chain CGA constitutes follitropin, the follicle-stimulating hormone, and provides its biological specificity to the hormone heterodimer. Binds FSHR, a G protein-coupled receptor, on target cells to activate downstream signaling pathways. Follitropin is involved in follicle development and spermatogenesis in reproductive organs. The sequence is that of Follitropin subunit beta (FSHB) from Cervus nippon (Sika deer).